A 525-amino-acid polypeptide reads, in one-letter code: MFGSATANPPAQRDLPSSDSDSPTPDAQPPYLLEISHISKGFPGVIALNDVQLRVRPGSVLALMGENGAGKSTLMKIIAGIYQPDSGEIRLRGKPIRFETPLSALQAGIAMIHQELNLMPFMSIAENIWIGREQLNGLHMVDHREMHRCTTELLERLRIRLDPEDLVGNLSIAERQMVEIAKAVSYNSDVLIMDEPTSAITETEVAHLFSIINDLRAQGKGIIYITHKMNEVFEIADEVAVFRDGAYIGLQRAESMDGDSLITMMVGRELTQLFPEREKPPGEVLLSVSNLCLNGIFKDVSFDLRAGEILGIAGLMGSGRTNVAETLFGITPSDSGEVRFDGTTVHIADPHQAIELGFALLTEDRKLTGLFPCLSVMENMEMAVLANYAGNGFVQQKALRALCEDMCKKLRVKTPSLEQCIDTLSGGNQQKALLARWLMTNPRLLILDEPTRGIDVGAKAEIYRLISLLASEGMAVIMISSELPEVLGMSDRVMVMHEGEMMGILDRGEATQEKVMHLASGHKVH.

The tract at residues 1–30 (MFGSATANPPAQRDLPSSDSDSPTPDAQPP) is disordered. Positions 14–25 (DLPSSDSDSPTP) are enriched in low complexity. ABC transporter domains lie at 33 to 269 (LEIS…VGRE) and 279 to 523 (KPPG…SGHK). 65 to 72 (GENGAGKS) serves as a coordination point for ATP.

It belongs to the ABC transporter superfamily. Carbohydrate importer 2 (CUT2) (TC 3.A.1.2) family.

It localises to the cell inner membrane. The catalysed reaction is D-ribose(out) + ATP + H2O = D-ribose(in) + ADP + phosphate + H(+). It carries out the reaction D-galactose(out) + ATP + H2O = D-galactose(in) + ADP + phosphate + H(+). In terms of biological role, part of an ABC transporter complex involved in carbohydrate import. Could be involved in ribose, galactose and/or methyl galactoside import. Responsible for energy coupling to the transport system. This Pseudomonas savastanoi pv. phaseolicola (strain 1448A / Race 6) (Pseudomonas syringae pv. phaseolicola (strain 1448A / Race 6)) protein is Putative ribose/galactose/methyl galactoside import ATP-binding protein.